The chain runs to 232 residues: Large ribosomal subunit protein uL1 (232 aa).

The protein belongs to the universal ribosomal protein uL1 family. As to quaternary structure, part of the 50S ribosomal subunit.

Binds directly to 23S rRNA. The L1 stalk is quite mobile in the ribosome, and is involved in E site tRNA release. In terms of biological role, protein L1 is also a translational repressor protein, it controls the translation of the L11 operon by binding to its mRNA. The polypeptide is Large ribosomal subunit protein uL1 (Mesorhizobium japonicum (strain LMG 29417 / CECT 9101 / MAFF 303099) (Mesorhizobium loti (strain MAFF 303099))).